The primary structure comprises 403 residues: Ribose-phosphate pyrophosphokinase 1, chloroplastic (403 aa).

The N-terminal 49 residues, 1-49 (MASLGLSFPPAAKTPTYLASSSSTFFSNSSLSVRTSQFRSRNSVFACVK), are a transit peptide targeting the chloroplast. Residues Asp217, His219, Asp228, and Asp232 each contribute to the Mg(2+) site. The binding of phosphoribosylpyrophosphate stretch occupies residues 303-318 (GKVAIMVDDMIDTAGT).

It belongs to the ribose-phosphate pyrophosphokinase family. Mg(2+) is required as a cofactor.

The protein resides in the plastid. It localises to the chloroplast. The enzyme catalyses D-ribose 5-phosphate + ATP = 5-phospho-alpha-D-ribose 1-diphosphate + AMP + H(+). This chain is Ribose-phosphate pyrophosphokinase 1, chloroplastic (PRS1), found in Arabidopsis thaliana (Mouse-ear cress).